Reading from the N-terminus, the 284-residue chain is Zinc finger protein ZAT3 (284 aa).

The segment covering 1–12 has biased composition (basic and acidic residues); the sequence is MNNNHSYDDRSF. The disordered stretch occupies residues 1 to 76; the sequence is MNNNHSYDDR…KPDPNAPKIT (76 aa). A compositionally biased stretch (polar residues) spans 18-37; that stretch reads PSNTSNPNPNLQFALSSSYD. The span at 47–62 shows a compositional bias: low complexity; that stretch reads TVASSSSSSPKSASKP. 3 consecutive C2H2-type zinc fingers follow at residues 77-99, 162-184, and 222-244; these read RPCT…MRCH, FECG…RASH, and HKCN…MRCH.

In terms of assembly, interacts (via the EAR motif) with TPL. As to expression, expressed exclusively in pollen.

It localises to the nucleus. Its function is as follows. Mediates the regulation of male germ cell division by DUO1. This Arabidopsis thaliana (Mouse-ear cress) protein is Zinc finger protein ZAT3.